The primary structure comprises 45 residues: Ribosome-inactivating protein TAP-29 (45 aa).

It belongs to the ribosome-inactivating protein family. Type 1 RIP subfamily.

It carries out the reaction Endohydrolysis of the N-glycosidic bond at one specific adenosine on the 28S rRNA.. Capable of inhibiting HIV-1 infection and replication. It inactivates eukaryotic 60S ribosomal subunits. This Trichosanthes kirilowii (Chinese snake gourd) protein is Ribosome-inactivating protein TAP-29.